An 838-amino-acid chain; its full sequence is Protein translocase subunit SecA (838 aa).

ATP contacts are provided by residues Q85, G103–T107, and D493. Zn(2+)-binding residues include C823, C825, C834, and H835.

Belongs to the SecA family. Monomer and homodimer. Part of the essential Sec protein translocation apparatus which comprises SecA, SecYEG and auxiliary proteins SecDF. Other proteins may also be involved. Requires Zn(2+) as cofactor.

It is found in the cell membrane. It localises to the cytoplasm. It carries out the reaction ATP + H2O + cellular proteinSide 1 = ADP + phosphate + cellular proteinSide 2.. Part of the Sec protein translocase complex. Interacts with the SecYEG preprotein conducting channel. Has a central role in coupling the hydrolysis of ATP to the transfer of proteins into and across the cell membrane, serving as an ATP-driven molecular motor driving the stepwise translocation of polypeptide chains across the membrane. This Streptococcus gordonii (strain Challis / ATCC 35105 / BCRC 15272 / CH1 / DL1 / V288) protein is Protein translocase subunit SecA.